The sequence spans 421 residues: Serine hydroxymethyltransferase (421 aa).

(6S)-5,6,7,8-tetrahydrofolate-binding positions include Leu-121 and Gly-125–Leu-127. Lys-230 is modified (N6-(pyridoxal phosphate)lysine). Ser-355–Phe-357 is a (6S)-5,6,7,8-tetrahydrofolate binding site.

It belongs to the SHMT family. In terms of assembly, homodimer. Pyridoxal 5'-phosphate serves as cofactor.

The protein localises to the cytoplasm. It catalyses the reaction (6R)-5,10-methylene-5,6,7,8-tetrahydrofolate + glycine + H2O = (6S)-5,6,7,8-tetrahydrofolate + L-serine. The protein operates within one-carbon metabolism; tetrahydrofolate interconversion. Its pathway is amino-acid biosynthesis; glycine biosynthesis; glycine from L-serine: step 1/1. Catalyzes the reversible interconversion of serine and glycine with tetrahydrofolate (THF) serving as the one-carbon carrier. This reaction serves as the major source of one-carbon groups required for the biosynthesis of purines, thymidylate, methionine, and other important biomolecules. Also exhibits THF-independent aldolase activity toward beta-hydroxyamino acids, producing glycine and aldehydes, via a retro-aldol mechanism. The sequence is that of Serine hydroxymethyltransferase from Cellvibrio japonicus (strain Ueda107) (Pseudomonas fluorescens subsp. cellulosa).